The sequence spans 388 residues: Alanine racemase (388 aa).

Lysine 39 serves as the catalytic Proton acceptor; specific for D-alanine. N6-(pyridoxal phosphate)lysine is present on lysine 39. Lysine 129 carries the N6-carboxylysine modification. Position 136 (arginine 136) interacts with substrate. The active-site Proton acceptor; specific for L-alanine is tyrosine 265. Methionine 312 is a binding site for substrate.

This sequence belongs to the alanine racemase family. As to quaternary structure, homodimer. Requires pyridoxal 5'-phosphate as cofactor.

It catalyses the reaction L-alanine = D-alanine. It functions in the pathway amino-acid biosynthesis; D-alanine biosynthesis; D-alanine from L-alanine: step 1/1. Its activity is regulated as follows. Inhibited by acetate and propionate. Irreversibly inhibited by cycloserine. Functionally, catalyzes the interconversion of L-alanine and D-alanine. Also weakly active on serine. In Geobacillus stearothermophilus (Bacillus stearothermophilus), this protein is Alanine racemase (alr).